Consider the following 167-residue polypeptide: Small ribosomal subunit protein uS5 (167 aa).

The region spanning 12 to 75 (LEDNVVAINR…EAARKNLIEV (64 aa)) is the S5 DRBM domain.

Belongs to the universal ribosomal protein uS5 family. Part of the 30S ribosomal subunit. Contacts proteins S4 and S8.

Functionally, with S4 and S12 plays an important role in translational accuracy. In terms of biological role, located at the back of the 30S subunit body where it stabilizes the conformation of the head with respect to the body. This chain is Small ribosomal subunit protein uS5, found in Levilactobacillus brevis (strain ATCC 367 / BCRC 12310 / CIP 105137 / JCM 1170 / LMG 11437 / NCIMB 947 / NCTC 947) (Lactobacillus brevis).